A 260-amino-acid chain; its full sequence is Carbonic anhydrase 2 (260 aa).

Position 2 is an N-acetylserine (S2). Position 2 is a phosphoserine (S2). Residues H3–F259 enclose the Alpha-carbonic anhydrase domain. The active-site Proton donor/acceptor is the H64. Residues H94, H96, and H119 each coordinate Zn(2+). Phosphoserine is present on residues S165 and S172. T198–T199 is a binding site for substrate.

Belongs to the alpha-carbonic anhydrase family. In terms of assembly, interacts with SLC4A4. Interaction with SLC4A7 regulates SLC4A7 transporter activity. Interacts with SLC26A6 isoform 4 (via C-terminus cytoplasmic domain). Requires Zn(2+) as cofactor. Co(2+) is required as a cofactor.

Its subcellular location is the cytoplasm. The protein localises to the cell membrane. It catalyses the reaction hydrogencarbonate + H(+) = CO2 + H2O. It carries out the reaction urea = cyanamide + H2O. Its activity is regulated as follows. Activated by X-ray, histamine, L-adrenaline, L- and D-phenylalanine, L- and D-histidine, L-His-OMe and beta-Ala-His (carnosine). Competitively inhibited by saccharin, thioxolone, coumarins, 667-coumate, celecoxib (Celebrex), valdecoxib (Bextra), SC-125, SC-560, diclofenac, acetate, azide, bromide, sulfonamide derivatives such as acetazolamide (AZA), methazolamide (MZA), ethoxzolamide (EZA), dichlorophenamide (DCP), brinzolamide, dansylamide, thiabendazole-5-sulfonamide, trifluoromethane sulfonamide and N-hydroxysulfamide, fructose-based sugar sulfamate RWJ-37497, and Foscarnet (phosphonoformate trisodium salt). Repressed strongly by hydrogen sulfide(HS) and weakly by nitrate (NO(3)). Esterase activity weakly reduced by cyanamide. N-hydroxyurea interferes with zinc binding and inhibit activity. Its function is as follows. Catalyzes the reversible hydration of carbon dioxide. Can also hydrate cyanamide to urea. Stimulates the chloride-bicarbonate exchange activity of SLC26A6. Essential for bone resorption and osteoclast differentiation. Involved in the regulation of fluid secretion into the anterior chamber of the eye. Contributes to intracellular pH regulation in the duodenal upper villous epithelium during proton-coupled peptide absorption. The polypeptide is Carbonic anhydrase 2 (CA2) (Homo sapiens (Human)).